Reading from the N-terminus, the 133-residue chain is MGMTSDTIADLLTRIRNALKAEHLYVDLEHSKMREAIVRILKQHGFLAHYLVKEENRKRTMRIFLQYSNDRRPVIRQLKRVSKPSRRVYVPAAKIPYVFGNMGISVLSTSQGVLDGATARAKNIGGELLCLVW.

It belongs to the universal ribosomal protein uS8 family. Part of the 30S ribosomal subunit. Contacts proteins S5 and S12.

Functionally, one of the primary rRNA binding proteins, it binds directly to 16S rRNA central domain where it helps coordinate assembly of the platform of the 30S subunit. The polypeptide is Small ribosomal subunit protein uS8 (Chlamydia caviae (strain ATCC VR-813 / DSM 19441 / 03DC25 / GPIC) (Chlamydophila caviae)).